A 344-amino-acid chain; its full sequence is UDP-N-acetylenolpyruvoylglucosamine reductase (344 aa).

In terms of domain architecture, FAD-binding PCMH-type spans 17–187; sequence VDYACSELIS…TGVGIKLAKK (171 aa). The active site involves Arg-163. Residue Ser-233 is the Proton donor of the active site. Glu-329 is an active-site residue.

Belongs to the MurB family. FAD is required as a cofactor.

It localises to the cytoplasm. The enzyme catalyses UDP-N-acetyl-alpha-D-muramate + NADP(+) = UDP-N-acetyl-3-O-(1-carboxyvinyl)-alpha-D-glucosamine + NADPH + H(+). Its pathway is cell wall biogenesis; peptidoglycan biosynthesis. Functionally, cell wall formation. The protein is UDP-N-acetylenolpyruvoylglucosamine reductase of Shewanella sediminis (strain HAW-EB3).